The chain runs to 254 residues: Large ribosomal subunit protein uL4 (254 aa).

The disordered stretch occupies residues 45-70 (PWGNDPEAGKRTSAKGWGSGRGTARV).

The protein belongs to the universal ribosomal protein uL4 family. Part of the 50S ribosomal subunit.

Functionally, one of the primary rRNA binding proteins, this protein initially binds near the 5'-end of the 23S rRNA. It is important during the early stages of 50S assembly. It makes multiple contacts with different domains of the 23S rRNA in the assembled 50S subunit and ribosome. In terms of biological role, forms part of the polypeptide exit tunnel. The polypeptide is Large ribosomal subunit protein uL4 (Methanobrevibacter smithii (strain ATCC 35061 / DSM 861 / OCM 144 / PS)).